A 196-amino-acid polypeptide reads, in one-letter code: Peptide deformylase (196 aa).

Fe cation-binding residues include cysteine 123 and histidine 166. Residue glutamate 167 is part of the active site. Position 170 (histidine 170) interacts with Fe cation.

This sequence belongs to the polypeptide deformylase family. Fe(2+) is required as a cofactor.

The catalysed reaction is N-terminal N-formyl-L-methionyl-[peptide] + H2O = N-terminal L-methionyl-[peptide] + formate. Functionally, removes the formyl group from the N-terminal Met of newly synthesized proteins. Requires at least a dipeptide for an efficient rate of reaction. N-terminal L-methionine is a prerequisite for activity but the enzyme has broad specificity at other positions. The protein is Peptide deformylase of Lactococcus lactis subsp. lactis (strain IL1403) (Streptococcus lactis).